The primary structure comprises 247 residues: MHKLVLIRHGESTWNLENRFTGWTDVDLTPTGIEQAKTAGRLLKAEGYEFDLAFTSVLKRATRTLWHVLDEMDRTWLPVEHSWRLNERHYGALQGLNKADMAKQYGDAQVLVWRRSYDTPPPALEAGDPRSERGDIRYAGLDPEQIPLTECLKDTVARVLPFWNERIAPAMRSGQRVMVAAHGNSIRALVKYLDGISDDDIVGLNIPNGIPLVYELDDDLKPLRHYYLGDAEAAAKAAAAVASQGKA.

Residues 8 to 15 (RHGESTWN), 21 to 22 (TG), Arg-60, 87 to 90 (ERHY), Lys-98, 114 to 115 (RR), and 183 to 184 (GN) each bind substrate. His-9 functions as the Tele-phosphohistidine intermediate in the catalytic mechanism. The active-site Proton donor/acceptor is the Glu-87.

It belongs to the phosphoglycerate mutase family. BPG-dependent PGAM subfamily. Homodimer.

The catalysed reaction is (2R)-2-phosphoglycerate = (2R)-3-phosphoglycerate. Its pathway is carbohydrate degradation; glycolysis; pyruvate from D-glyceraldehyde 3-phosphate: step 3/5. Its function is as follows. Catalyzes the interconversion of 2-phosphoglycerate and 3-phosphoglycerate. This chain is 2,3-bisphosphoglycerate-dependent phosphoglycerate mutase, found in Paracidovorax citrulli (strain AAC00-1) (Acidovorax citrulli).